A 152-amino-acid polypeptide reads, in one-letter code: Transcriptional regulator MraZ (152 aa).

SpoVT-AbrB domains follow at residues 5 to 52 (ATLV…PLPE) and 81 to 124 (ASEC…DETT).

Belongs to the MraZ family. In terms of assembly, dodecamer.

The protein localises to the cytoplasm. Its subcellular location is the nucleoid. Negatively regulates its own expression and that of the subsequent genes in the proximal part of the division and cell wall (dcw) gene cluster. Acts by binding directly to DNA. May also regulate the expression of genes outside the dcw cluster. This chain is Transcriptional regulator MraZ, found in Escherichia coli (strain K12).